The following is a 513-amino-acid chain: Na(+)/H(+) antiporter NhaB (513 aa).

9 helical membrane passes run 21-41 (ICIIAFLVINPLIYFFISPFV), 88-108 (IMANFEVILLLMFMVAGIYFM), 119-139 (LLIVIHSKKILSLAFCLSATF), 243-263 (LPVSLPVLICGVITCLLLEHF), 299-318 (MGIQALAGIWLVVGLALHLA), 322-344 (IIGLTIIIICTAFCGITDEHAIG), 350-370 (PMPFTALIVVFFTVVAVIVDL), 389-409 (LALFYVFNGLLSMISDNVFVG), and 477-497 (MALPYTIVLSIIGFLSLEFLL).

Belongs to the NhaB Na(+)/H(+) (TC 2.A.34) antiporter family.

The protein localises to the cell inner membrane. The catalysed reaction is 2 Na(+)(in) + 3 H(+)(out) = 2 Na(+)(out) + 3 H(+)(in). Its function is as follows. Na(+)/H(+) antiporter that extrudes sodium in exchange for external protons. This Actinobacillus pleuropneumoniae serotype 5b (strain L20) protein is Na(+)/H(+) antiporter NhaB.